The following is a 266-amino-acid chain: Tryptophan synthase alpha chain (266 aa).

Active-site proton acceptor residues include Glu45 and Asp56.

This sequence belongs to the TrpA family. Tetramer of two alpha and two beta chains.

The catalysed reaction is (1S,2R)-1-C-(indol-3-yl)glycerol 3-phosphate + L-serine = D-glyceraldehyde 3-phosphate + L-tryptophan + H2O. It participates in amino-acid biosynthesis; L-tryptophan biosynthesis; L-tryptophan from chorismate: step 5/5. The alpha subunit is responsible for the aldol cleavage of indoleglycerol phosphate to indole and glyceraldehyde 3-phosphate. The protein is Tryptophan synthase alpha chain of Novosphingobium aromaticivorans (strain ATCC 700278 / DSM 12444 / CCUG 56034 / CIP 105152 / NBRC 16084 / F199).